The primary structure comprises 244 residues: tRNA (guanine-N(1)-)-methyltransferase (244 aa).

Residues G112 and 132 to 137 (IGDYIL) contribute to the S-adenosyl-L-methionine site.

It belongs to the RNA methyltransferase TrmD family. As to quaternary structure, homodimer.

The protein resides in the cytoplasm. The enzyme catalyses guanosine(37) in tRNA + S-adenosyl-L-methionine = N(1)-methylguanosine(37) in tRNA + S-adenosyl-L-homocysteine + H(+). Specifically methylates guanosine-37 in various tRNAs. The polypeptide is tRNA (guanine-N(1)-)-methyltransferase (Geobacillus kaustophilus (strain HTA426)).